Consider the following 1151-residue polypeptide: Protein kinase C-like 1 (1151 aa).

REM-1 domains lie at 1 to 67 (MSFS…KTAQ) and 106 to 183 (KYDC…INVD). Positions 64-88 (KTAQQSQGENGSEDNERCNSKEYGF) are disordered. Residues 190–309 (QPNDIMDNQQ…IRKKKAGQTN (120 aa)) form the C2 domain. Serine 226 is subject to Phosphoserine. Residues 306-331 (GQTNEQQGWVNASNINGGSSLASEEG) form a disordered region. Phorbol-ester/DAG-type zinc fingers lie at residues 414–461 (GHHF…VTKC) and 481–531 (PHRF…PDFC). Disordered regions lie at residues 546–620 (QDTK…IIDK) and 649–669 (AQQTAEFSSPEKTLDPTSNRR). Polar residues predominate over residues 560–577 (PSAQLGSSIGTANGSDLS). The span at 605-620 (VGRDSPTKQHDPIIDK) shows a compositional bias: basic and acidic residues. Position 761 is a phosphoserine (serine 761). The disordered stretch occupies residues 782–816 (LAPTSTHASRTTDQQSPQKSQTSTSAKHKKRAAKR). Residues 792 to 806 (TTDQQSPQKSQTSTS) are compositionally biased toward low complexity. Residues 807-816 (AKHKKRAAKR) are compositionally biased toward basic residues. Residues 824 to 1083 (FVLLKVLGKG…ADEVMEEPFF (260 aa)) enclose the Protein kinase domain. ATP is bound by residues 830 to 838 (LGKGNFGKV) and lysine 853. The active-site Proton acceptor is the aspartate 949. The AGC-kinase C-terminal domain occupies 1084–1151 (RNINFDDILN…FSFMPDDLDL (68 aa)).

Belongs to the protein kinase superfamily. AGC Ser/Thr protein kinase family. PKC subfamily.

It carries out the reaction L-seryl-[protein] + ATP = O-phospho-L-seryl-[protein] + ADP + H(+). The enzyme catalyses L-threonyl-[protein] + ATP = O-phospho-L-threonyl-[protein] + ADP + H(+). Required for cell growth and for the G2-&gt;M transition of the cell division cycle. Mediates a protein kinase cascade; it activates BCK1 which itself activates MKK1/MKK2. The chain is Protein kinase C-like 1 (PKC1) from Saccharomyces cerevisiae (strain ATCC 204508 / S288c) (Baker's yeast).